Here is a 174-residue protein sequence, read N- to C-terminus: Co-chaperone protein HscB homolog (174 aa).

Positions 2–74 constitute a J domain; the sequence is NYFELFKFSP…IRRAEHLLSL (73 aa).

It belongs to the HscB family. Interacts with HscA and stimulates its ATPase activity.

Functionally, co-chaperone involved in the maturation of iron-sulfur cluster-containing proteins. Seems to help targeting proteins to be folded toward HscA. The chain is Co-chaperone protein HscB homolog from Shewanella sp. (strain W3-18-1).